A 437-amino-acid chain; its full sequence is 26S proteasome regulatory subunit 4 homolog (437 aa).

The tract at residues 1 to 47 (MGQGVSSGQDKKKKKGSNQKPKYEPPVQSKFGRKKRKGGPATAEKLP) is disordered. Residue Gly-2 is the site of N-myristoyl glycine attachment. 223–230 (GAPGTGKT) is a binding site for ATP. Glycyl lysine isopeptide (Lys-Gly) (interchain with G-Cter in ubiquitin) cross-links involve residues Lys-234, Lys-255, and Lys-290.

Belongs to the AAA ATPase family.

The protein localises to the cytoplasm. Its subcellular location is the nucleus. Its function is as follows. The 26S proteasome is involved in the ATP-dependent degradation of ubiquitinated proteins. The regulatory (or ATPase) complex confers ATP dependency and substrate specificity to the 26S complex. Has ATPase activity. This chain is 26S proteasome regulatory subunit 4 homolog (RPT2), found in Saccharomyces cerevisiae (strain ATCC 204508 / S288c) (Baker's yeast).